The primary structure comprises 608 residues: MADAWDIKSLKTKRNTLREKLEKRKKERIEILSDIQEDLTNPKKELVEADLEVQKEVLQALSSCSLALPIVSTQVVEKIAGSSLEMVNFILGKLANQGAIVIRNVTIGTEAGCEIISVQPKELKEILEDTNDTCQQKEEEAKRKLEVDDVDQPQEKTIKLESTVARKESTSLDAPDDIMMLLSMPSTREKQSKQVGEEILELLTKPTAKERSVAEKFKSHGGAQVMEFCSHGTKVECLKAQQATAEMAAKKKQERRDEKELRPDVDAGENVTGKVPKTESAAEDGEIIAEVINNCEAESQESTDGSDTCSSETTDKCTKLHFKKIIQAHTDESLGDCSFLNTCFHMATCKYVHYEVDTLPHINTNKPTDVKTKLSLKRSVDSSCTLYPPQWIQCDLRFLDMTVLGKFAVVMADPPWDIHMELPYGTMSDDEMRALGVPALQDDGLIFLWVTGRAMELGRDCLKLWGYERVDELIWVKTNQLQRIIRTGRTGHWLNHGKEHCLVGMKGNPTNLNRGLDCDVIVAEVRATSHKPDEIYGIIERLSPGTRKIELFGRPHNIQPNWITLGNQLDGIRLVDPELITQFQKRYPDGNCMSPASANAASINGIQK.

Residues 250 to 265 (KKKQERRDEKELRPDV) are compositionally biased toward basic and acidic residues. The disordered stretch occupies residues 250–272 (KKKQERRDEKELRPDVDAGENVT). S-adenosyl-L-methionine-binding positions include 395-396 (DL) and Asp-413. Positions 414-428 (PPWDIHMELPYGTMS) are gate loop 1. The segment at 480-497 (QLQRIIRTGRTGHWLNHG) is interphase loop. The positively charged region required for RNA-binding stretch occupies residues 483–496 (RIIRTGRTGHWLNH). A gate loop 2 region spans residues 525–533 (VRATSHKPD). Residues Lys-531, 554 to 557 (RPHN), and 567 to 568 (NQ) contribute to the S-adenosyl-L-methionine site.

This sequence belongs to the MT-A70-like family. Component of the WMM complex, a N6-methyltransferase complex composed of a catalytic subcomplex, named MAC, and of an associated subcomplex, named MACOM. The MAC subcomplex is composed of Ime4/Mettl3 and Mettl14. The MACOM subcomplex is composed of fl(2)d, Flacc/Xio, Hakai, vir, and, in some cases of nito. As to expression, expressed in testes. In the ovaries, detected in germaria, prefollicle, follicle and polar cells (at protein levels). Detected in the ooplasm and in the cells of the 16-cell cyst of early stages (at protein levels).

It localises to the nucleus. It catalyses the reaction an adenosine in mRNA + S-adenosyl-L-methionine = an N(6)-methyladenosine in mRNA + S-adenosyl-L-homocysteine + H(+). Its function is as follows. Catalytic component of the WMM complex, a complex that mediates N6-methyladenosine (m6A) methylation of mRNAs, a modification that plays a role in the efficiency of mRNA splicing and is required for sex determination. In the heterodimer formed with Mettl14, constitutes the catalytic core. Required for sex determination and dosage compensation via Sxl alternative splicing: m6A methylation acts as a key regulator of Sxl pre-mRNA and promotes female-specific alternative splicing of Sxl, which determines female physiognomy. M6A methylation is also required for neuronal functions. During oogenesis, required for egg chamber development probably as part of the N/Notch signaling. The protein is N(6)-adenosine-methyltransferase MT-A70-like protein of Drosophila melanogaster (Fruit fly).